Consider the following 209-residue polypeptide: MIAIIDYGMGNIRSIEQALTSIGVEHLVTDRQREIVKSDGVILPGVGAFPKAMEALEAKKLVTVLQECGKTGKPLLGICLGMQLLFEKSEEMKSSNGLGLLPGVVRKLQVPYKIPHMGWNRLTKTKEMPIWNRVADGSFVYYVHSYYAECPNDMICGTSEYGISVPGLVAKGNIFGAQFHPEKSGEIGIQMLANFKGVVKQWKSSQLSI.

A Glutamine amidotransferase type-1 domain is found at 1–205; that stretch reads MIAIIDYGMG…KGVVKQWKSS (205 aa). Residue cysteine 79 is the Nucleophile of the active site. Catalysis depends on residues histidine 180 and glutamate 182.

As to quaternary structure, heterodimer of HisH and HisF.

The protein localises to the cytoplasm. The enzyme catalyses 5-[(5-phospho-1-deoxy-D-ribulos-1-ylimino)methylamino]-1-(5-phospho-beta-D-ribosyl)imidazole-4-carboxamide + L-glutamine = D-erythro-1-(imidazol-4-yl)glycerol 3-phosphate + 5-amino-1-(5-phospho-beta-D-ribosyl)imidazole-4-carboxamide + L-glutamate + H(+). The catalysed reaction is L-glutamine + H2O = L-glutamate + NH4(+). The protein operates within amino-acid biosynthesis; L-histidine biosynthesis; L-histidine from 5-phospho-alpha-D-ribose 1-diphosphate: step 5/9. IGPS catalyzes the conversion of PRFAR and glutamine to IGP, AICAR and glutamate. The HisH subunit catalyzes the hydrolysis of glutamine to glutamate and ammonia as part of the synthesis of IGP and AICAR. The resulting ammonia molecule is channeled to the active site of HisF. The protein is Imidazole glycerol phosphate synthase subunit HisH of Bacillus cytotoxicus (strain DSM 22905 / CIP 110041 / 391-98 / NVH 391-98).